The sequence spans 654 residues: DNA-directed RNA polymerase III subunit RPC3 (654 aa).

At Thr-27 the chain carries Phosphothreonine. 2 disordered regions span residues 381–401 and 422–448; these read LSRK…ASLP and KSLQ…EDPH. Residues Ser-392 and Ser-394 each carry the phosphoserine modification. A compositionally biased stretch (acidic residues) spans 429–444; it reads DTQEEDEEEEDLDADT. Positions 581 to 602 are leucine-zipper; that stretch reads LEWNMANLLFKKEKLKQENSTL.

It belongs to the RNA polymerase beta chain family. In terms of assembly, component of the RNA polymerase III (Pol III) complex consisting of 17 subunits.

The protein localises to the cytoplasm. It localises to the nucleus. In terms of biological role, DNA-dependent RNA polymerase catalyzes the transcription of DNA into RNA using the four ribonucleoside triphosphates as substrates. Specific core component of RNA polymerase III which synthesizes small RNAs, such as 5S rRNA and tRNAs. The protein is DNA-directed RNA polymerase III subunit RPC3 (RPC82) of Saccharomyces cerevisiae (strain YJM789) (Baker's yeast).